A 159-amino-acid chain; its full sequence is Probable carbonic anhydrase (159 aa).

Substrate is bound by residues 33-35 (RGD) and 48-49 (QD). His-54, His-71, and His-76 together coordinate Zn(2+).

Belongs to the gamma-class carbonic anhydrase family. Requires Zn(2+) as cofactor.

The enzyme catalyses hydrogencarbonate + H(+) = CO2 + H2O. Functionally, probably reversibly hydrates carbon dioxide. The sequence is that of Probable carbonic anhydrase from Methanocaldococcus jannaschii (strain ATCC 43067 / DSM 2661 / JAL-1 / JCM 10045 / NBRC 100440) (Methanococcus jannaschii).